Consider the following 251-residue polypeptide: Vacuolar protein sorting-associated protein 37D (251 aa).

Residues 93-182 (AENCADKLQR…RRRERSAQPA (90 aa)) form the VPS37 C-terminal domain. Residues 174–251 (RRERSAQPAP…RPSQPEPPHR (78 aa)) are disordered. A compositionally biased stretch (pro residues) spans 221–251 (PVPPLKGSPGCPLGPAPLLSPRPSQPEPPHR).

It belongs to the VPS37 family. In terms of assembly, component of the ESCRT-I complex (endosomal sorting complex required for transport I) which consists of TSG101, VPS28, a VPS37 protein (VPS37A to -D) and MVB12A or MVB12B in a 1:1:1:1 stoichiometry. Interacts with TSG101 and MVB12A. Component of the ESCRT-I complex (endosomal sorting complex required for transport I) which consists of TSG101, VPS28, a VPS37 protein (VPS37A to -D) and UBAP1 in a 1:1:1:1 stoichiometry.

The protein localises to the late endosome membrane. Component of the ESCRT-I complex, a regulator of vesicular trafficking process. Required for the sorting of endocytic ubiquitinated cargos into multivesicular bodies. May be involved in cell growth and differentiation. This is Vacuolar protein sorting-associated protein 37D from Homo sapiens (Human).